A 334-amino-acid polypeptide reads, in one-letter code: Glycerol-1-phosphate dehydrogenase [NAD(P)+] (334 aa).

Residues 77 to 81 and 99 to 102 each bind NAD(+); these read GRPID and TTAS. Asp104 is a binding site for substrate. Residue Ser108 coordinates NAD(+). Substrate is bound at residue Asp147. 2 residues coordinate Zn(2+): Asp147 and His225. His229 provides a ligand contact to substrate. Residue His246 coordinates Zn(2+).

Belongs to the glycerol-1-phosphate dehydrogenase family. Zn(2+) is required as a cofactor.

The protein resides in the cytoplasm. It carries out the reaction sn-glycerol 1-phosphate + NAD(+) = dihydroxyacetone phosphate + NADH + H(+). The catalysed reaction is sn-glycerol 1-phosphate + NADP(+) = dihydroxyacetone phosphate + NADPH + H(+). Its pathway is membrane lipid metabolism; glycerophospholipid metabolism. Catalyzes the NAD(P)H-dependent reduction of dihydroxyacetonephosphate (DHAP or glycerone phosphate) to glycerol 1-phosphate (G1P). The G1P thus generated is used as the glycerophosphate backbone of phospholipids in the cellular membranes of Archaea. In Methanococcus maripaludis (strain C6 / ATCC BAA-1332), this protein is Glycerol-1-phosphate dehydrogenase [NAD(P)+].